We begin with the raw amino-acid sequence, 411 residues long: 2,3-bisphosphoglycerate-independent phosphoglycerate mutase (411 aa).

Belongs to the BPG-independent phosphoglycerate mutase family. A-PGAM subfamily.

The catalysed reaction is (2R)-2-phosphoglycerate = (2R)-3-phosphoglycerate. It participates in carbohydrate degradation; glycolysis; pyruvate from D-glyceraldehyde 3-phosphate: step 3/5. Functionally, catalyzes the interconversion of 2-phosphoglycerate and 3-phosphoglycerate. This Pyrobaculum arsenaticum (strain DSM 13514 / JCM 11321 / PZ6) protein is 2,3-bisphosphoglycerate-independent phosphoglycerate mutase.